A 374-amino-acid chain; its full sequence is tRNA-specific 2-thiouridylase MnmA (374 aa).

Residues 12-19 and M38 each bind ATP; that span reads GMSGGVDS. The segment at 98–100 is interaction with target base in tRNA; the sequence is NPD. C103 (nucleophile) is an active-site residue. Residues C103 and C202 are joined by a disulfide bond. Position 128 (G128) interacts with ATP. The segment at 152–154 is interaction with tRNA; that stretch reads KDQ. The active-site Cysteine persulfide intermediate is C202. Residues 316–317 are interaction with tRNA; the sequence is RY.

This sequence belongs to the MnmA/TRMU family.

Its subcellular location is the cytoplasm. It carries out the reaction S-sulfanyl-L-cysteinyl-[protein] + uridine(34) in tRNA + AH2 + ATP = 2-thiouridine(34) in tRNA + L-cysteinyl-[protein] + A + AMP + diphosphate + H(+). Its function is as follows. Catalyzes the 2-thiolation of uridine at the wobble position (U34) of tRNA, leading to the formation of s(2)U34. The chain is tRNA-specific 2-thiouridylase MnmA from Vibrio vulnificus (strain YJ016).